Here is a 91-residue protein sequence, read N- to C-terminus: Probable Fe(2+)-trafficking protein (91 aa).

It belongs to the Fe(2+)-trafficking protein family.

In terms of biological role, could be a mediator in iron transactions between iron acquisition and iron-requiring processes, such as synthesis and/or repair of Fe-S clusters in biosynthetic enzymes. In Mannheimia succiniciproducens (strain KCTC 0769BP / MBEL55E), this protein is Probable Fe(2+)-trafficking protein.